Reading from the N-terminus, the 479-residue chain is GTPase Obg (479 aa).

Residues 2 to 159 (PRFVDRVVIH…RDLTLELKTV (158 aa)) enclose the Obg domain. The 181-residue stretch at 160–340 (ADVGLVGFPS…LIFGLWQMVS (181 aa)) folds into the OBG-type G domain. GTP contacts are provided by residues 166-173 (GFPSAGKS), 191-195 (FTTLV), 212-215 (DVPG), 292-295 (NKID), and 321-323 (STV). Ser-173 and Thr-193 together coordinate Mg(2+). The 79-residue stretch at 358–436 (PVPVDDSGFD…IGEMTFDWEP (79 aa)) folds into the OCT domain. Positions 438-479 (TPAGGHVAMSGRGTDVRLERSDRVGAAERKAARRQRRERDDD) are disordered. The segment covering 451–467 (TDVRLERSDRVGAAERK) has biased composition (basic and acidic residues).

This sequence belongs to the TRAFAC class OBG-HflX-like GTPase superfamily. OBG GTPase family. In terms of assembly, monomer. Mg(2+) is required as a cofactor.

Its subcellular location is the cytoplasm. An essential GTPase which binds GTP, GDP and possibly (p)ppGpp with moderate affinity, with high nucleotide exchange rates and a fairly low GTP hydrolysis rate. Plays a role in control of the cell cycle, stress response, ribosome biogenesis and in those bacteria that undergo differentiation, in morphogenesis control. In Mycobacterium ulcerans (strain Agy99), this protein is GTPase Obg.